The chain runs to 264 residues: 4-hydroxy-tetrahydrodipicolinate reductase (264 aa).

Glycine 8–methionine 13 contacts NAD(+). Lysine 36 serves as a coordination point for NADP(+). Residues glycine 97–threonine 99 and alanine 123–phenylalanine 126 contribute to the NAD(+) site. The Proton donor/acceptor role is filled by histidine 153. Position 154 (histidine 154) interacts with (S)-2,3,4,5-tetrahydrodipicolinate. Catalysis depends on lysine 157, which acts as the Proton donor. Glycine 163–threonine 164 is a (S)-2,3,4,5-tetrahydrodipicolinate binding site.

This sequence belongs to the DapB family.

It localises to the cytoplasm. The catalysed reaction is (S)-2,3,4,5-tetrahydrodipicolinate + NAD(+) + H2O = (2S,4S)-4-hydroxy-2,3,4,5-tetrahydrodipicolinate + NADH + H(+). The enzyme catalyses (S)-2,3,4,5-tetrahydrodipicolinate + NADP(+) + H2O = (2S,4S)-4-hydroxy-2,3,4,5-tetrahydrodipicolinate + NADPH + H(+). It functions in the pathway amino-acid biosynthesis; L-lysine biosynthesis via DAP pathway; (S)-tetrahydrodipicolinate from L-aspartate: step 4/4. Its function is as follows. Catalyzes the conversion of 4-hydroxy-tetrahydrodipicolinate (HTPA) to tetrahydrodipicolinate. The polypeptide is 4-hydroxy-tetrahydrodipicolinate reductase (Shouchella clausii (strain KSM-K16) (Alkalihalobacillus clausii)).